A 396-amino-acid chain; its full sequence is Probable isocitrate dehydrogenase [NAD] gamma 2, mitochondrial (396 aa).

A mitochondrion-targeting transit peptide spans 1–25; the sequence is MLAVTSCSMKTVLQYAVFLGHSREV. A citrate-binding site is contributed by threonine 117. 3 residues coordinate substrate: arginine 133, arginine 164, and aspartate 251. Position 251 (aspartate 251) interacts with Mn(2+). Asparagine 321 is a binding site for ADP.

This sequence belongs to the isocitrate and isopropylmalate dehydrogenases family. In terms of assembly, heterooligomer of subunits alpha (IDH3A), beta (IDH3B), and gamma (IDH3G) in the apparent ratio of 2:1:1. The heterodimer containing one IDH3A and one IDH3B subunit and the heterodimer containing one IDH3A and one IDH3G subunit assemble into a heterotetramer (which contains two subunits of IDH3A, one of IDH3B and one of IDH3G) and further into the heterooctamer. Mg(2+) serves as cofactor. The cofactor is Mn(2+).

The protein localises to the mitochondrion. Its activity is regulated as follows. The heterotetramer and the heterodimer composed of IDH3A and IDH3G subunits can be allosterically activated by citrate (CIT) or/and ADP, and the two activators can act independently or synergistically. The heterodimer composed of IDH3A and IDH3B subunits cannot be allosterically regulated and the allosteric regulation of the heterotetramer is through the IDH3G subunit and not the IDH3B subunit. The IDH3G subunit contains the allosteric site which consists of a CIT-binding site and an ADP-binding site, and the binding of CIT and ADP causes conformational changes at the allosteric site which are transmitted to the active site in the catalytic subunit (IDH3A) through a cascade of conformational changes at the heterodimer interface, leading to stabilization of the isocitrate-binding at the active site and thus activation of the enzyme. ATP can activate the heterotetramer and the heterodimer composed of IDH3A and IDH3G subunits at low concentrations but inhibits their activities at high concentrations, whereas ATP exhibits only inhibitory effect on the heterodimer composed of IDH3A and IDH3B subunits. In terms of biological role, regulatory subunit which plays a role in the allosteric regulation of the enzyme catalyzing the decarboxylation of isocitrate (ICT) into alpha-ketoglutarate. The heterodimer composed of the alpha (IDH3A) and beta (IDH3B) subunits and the heterodimer composed of the alpha (IDH3A) and gamma (IDH3G) subunits, have considerable basal activity but the full activity of the heterotetramer (containing two subunits of IDH3A, one of IDH3B and one of IDH3G) requires the assembly and cooperative function of both heterodimers. The protein is Probable isocitrate dehydrogenase [NAD] gamma 2, mitochondrial of Mus musculus (Mouse).